The chain runs to 98 residues: Large ribosomal subunit protein eL21 (98 aa).

Over residues 1 to 24 the composition is skewed to basic residues; sequence MVKKAHSFRRKTRGKLSKHPRRRG. A disordered region spans residues 1 to 27; sequence MVKKAHSFRRKTRGKLSKHPRRRGLPP.

The protein belongs to the eukaryotic ribosomal protein eL21 family. Part of the 50S ribosomal subunit.

The chain is Large ribosomal subunit protein eL21 from Thermococcus kodakarensis (strain ATCC BAA-918 / JCM 12380 / KOD1) (Pyrococcus kodakaraensis (strain KOD1)).